Here is a 57-residue protein sequence, read N- to C-terminus: UPF0391 membrane protein RPD_3366 (57 aa).

2 helical membrane-spanning segments follow: residues 4–24 (WVVT…GGIA) and 30–50 (IAKV…VVGL).

Belongs to the UPF0391 family.

The protein localises to the cell membrane. The polypeptide is UPF0391 membrane protein RPD_3366 (Rhodopseudomonas palustris (strain BisB5)).